The sequence spans 236 residues: Eukaryotic translation initiation factor 3 subunit J (236 aa).

The interval 1-88 is disordered; sequence MADDWESAAD…EAEAQRVASL (88 aa). Residues 28 to 46 are compositionally biased toward acidic residues; it reads GEDEDEDIKDSWEDEEEKK. Basic and acidic residues-rich tracts occupy residues 47–58 and 68–77; these read DEEKPTKTEAPA and AKLEQQARLE.

The protein belongs to the eIF-3 subunit J family. Component of the eukaryotic translation initiation factor 3 (eIF-3) complex. The eIF-3 complex interacts with pix.

The protein resides in the cytoplasm. Functionally, component of the eukaryotic translation initiation factor 3 (eIF-3) complex, which is involved in protein synthesis of a specialized repertoire of mRNAs and, together with other initiation factors, stimulates binding of mRNA and methionyl-tRNAi to the 40S ribosome. The eIF-3 complex specifically targets and initiates translation of a subset of mRNAs involved in cell proliferation. The sequence is that of Eukaryotic translation initiation factor 3 subunit J from Drosophila erecta (Fruit fly).